A 410-amino-acid chain; its full sequence is Succinyl-CoA:(R)-benzylsuccinate CoA-transferase subunit BbsE (410 aa).

It belongs to the CoA-transferase III family. As to quaternary structure, heterotetramer composed of 2 BbsE subunits and 2 BbsF subunits.

It carries out the reaction (R)-2-benzylsuccinate + succinyl-CoA = (R)-2-benzylsuccinyl-CoA + succinate. The protein operates within xenobiotic degradation; toluene degradation. Inhibited by (S)-benzylsuccinyl-CoA. Functionally, catalyzes the reversible conversion of (R)-2-benzylsuccinate to (R)-2-benzylsuccinyl-CoA. Inactive with (S)-benzylsuccinate. The chain is Succinyl-CoA:(R)-benzylsuccinate CoA-transferase subunit BbsE (bbsE) from Thauera aromatica.